Consider the following 427-residue polypeptide: Isocitrate dehydrogenase [NADP] (427 aa).

Position 114 (Thr114) interacts with NADP(+). D-threo-isocitrate-binding residues include Ser123, Asn125, Arg129, Arg139, and Arg163. Asp317 provides a ligand contact to Mg(2+). NADP(+) contacts are provided by residues 349–355 (HGTAPKY), Asn362, Tyr401, and Arg405.

It belongs to the isocitrate and isopropylmalate dehydrogenases family. Homodimer. Mg(2+) is required as a cofactor. Mn(2+) serves as cofactor.

The enzyme catalyses D-threo-isocitrate + NADP(+) = 2-oxoglutarate + CO2 + NADPH. Catalyzes the oxidative decarboxylation of isocitrate to 2-oxoglutarate and carbon dioxide with the concomitant reduction of NADP(+). The polypeptide is Isocitrate dehydrogenase [NADP] (icd) (Coxiella burnetii (strain RSA 493 / Nine Mile phase I)).